Here is a 379-residue protein sequence, read N- to C-terminus: Mannan endo-1,4-beta-mannosidase 7 (379 aa).

The substrate site is built by Trp-64 and Asn-179. The active-site Proton donor is the Glu-180. Tyr-260 lines the substrate pocket. Glu-300 serves as the catalytic Nucleophile. Residue Trp-342 coordinates substrate.

It belongs to the glycosyl hydrolase 5 (cellulase A) family. As to expression, expression not detected.

It carries out the reaction Random hydrolysis of (1-&gt;4)-beta-D-mannosidic linkages in mannans, galactomannans and glucomannans.. The polypeptide is Mannan endo-1,4-beta-mannosidase 7 (MAN7) (Oryza sativa subsp. japonica (Rice)).